Consider the following 367-residue polypeptide: tRNA-specific 2-thiouridylase MnmA (367 aa).

ATP-binding positions include 11–18 (AMSGGVDS) and Met37. The segment at 97–99 (NPD) is interaction with target base in tRNA. Cys102 functions as the Nucleophile in the catalytic mechanism. Cysteines 102 and 199 form a disulfide. Position 127 (Gly127) interacts with ATP. The segment at 149–151 (KDQ) is interaction with tRNA. The active-site Cysteine persulfide intermediate is Cys199. The interval 311–312 (RY) is interaction with tRNA.

This sequence belongs to the MnmA/TRMU family. As to quaternary structure, interacts with TusE.

The protein localises to the cytoplasm. It catalyses the reaction S-sulfanyl-L-cysteinyl-[protein] + uridine(34) in tRNA + AH2 + ATP = 2-thiouridine(34) in tRNA + L-cysteinyl-[protein] + A + AMP + diphosphate + H(+). Its function is as follows. Catalyzes the 2-thiolation of uridine at the wobble position (U34) of tRNA(Lys), tRNA(Glu) and tRNA(Gln), leading to the formation of s(2)U34, the first step of tRNA-mnm(5)s(2)U34 synthesis. Sulfur is provided by IscS, via a sulfur-relay system. Binds ATP and its substrate tRNAs. This is tRNA-specific 2-thiouridylase MnmA from Buchnera aphidicola subsp. Schizaphis graminum (strain Sg).